Consider the following 138-residue polypeptide: Larval cuticle protein 1 (138 aa).

The first 16 residues, 1–16 (MFKFVMVFAVLGVAAA), serve as a signal peptide directing secretion. Positions 49-110 (ADGFDADLLV…PVGAVLPTPP (62 aa)) constitute a Chitin-binding type R&amp;R domain.

Functionally, component of the larval cuticle. The protein is Larval cuticle protein 1 (Lcp1) of Drosophila miranda (Fruit fly).